Consider the following 702-residue polypeptide: Mesothelin-like protein (702 aa).

A signal peptide spans 1–35 (MAAAVTIPGPRIGALQSSGLTLLLSLAAHCSGPQA). The Extracellular portion of the chain corresponds to 36–638 (KVLSPGGLDA…AQASTSGSLW (603 aa)). N-linked (GlcNAc...) asparagine glycosylation is found at N122, N307, and N424. The disordered stretch occupies residues 588–611 (QLGLDASPTSPTGPAHGTRGPPST). The chain crosses the membrane as a helical span at residues 639–668 (APLGYLPLAMALPCSLLCLLHWGTCILVSV). At 669–702 (DSVASGWLGSQGSGAGKTEVLDSAGRPLGLTGQL) the chain is on the cytoplasmic side.

This sequence belongs to the mesothelin family.

Its subcellular location is the membrane. In terms of biological role, may play a role in cellular adhesion. In Homo sapiens (Human), this protein is Mesothelin-like protein (MSLNL).